The following is a 212-amino-acid chain: Ribosomal RNA small subunit methyltransferase G (212 aa).

S-adenosyl-L-methionine contacts are provided by residues G80, L85, 131–132 (AE), and R146.

It belongs to the methyltransferase superfamily. RNA methyltransferase RsmG family.

The protein resides in the cytoplasm. The enzyme catalyses guanosine(527) in 16S rRNA + S-adenosyl-L-methionine = N(7)-methylguanosine(527) in 16S rRNA + S-adenosyl-L-homocysteine. In terms of biological role, specifically methylates the N7 position of guanine in position 527 of 16S rRNA. This Xanthomonas euvesicatoria pv. vesicatoria (strain 85-10) (Xanthomonas campestris pv. vesicatoria) protein is Ribosomal RNA small subunit methyltransferase G.